A 393-amino-acid chain; its full sequence is Protein shisa-9B (393 aa).

An N-terminal signal peptide occupies residues 1 to 20 (MKSTGLLLGYFLMKVLVCDA). At 21–131 (EGEPGKSLDG…MDQHDPTKDK (111 aa)) the chain is on the extracellular side. The disordered stretch occupies residues 28–52 (LDGAVTASGSNDSRDGENGLSETPH). A glycan (N-linked (GlcNAc...) asparagine) is linked at N38. A helical transmembrane segment spans residues 132 to 152 (TNLIVYIICGVVAIMALVGIF). Residues 153–393 (TKLGLEKAHR…VTNSKTEVTV (241 aa)) are Cytoplasmic-facing. A disordered region spans residues 307–340 (QKQNGHKSKSTKVHSSHPLAYGSNTIANPGRMSS). Residues 310–321 (NGHKSKSTKVHS) are compositionally biased toward basic residues.

This sequence belongs to the shisa family. SHISA9 subfamily. Component of some AMPA receptors (ionotropic glutamate receptors) complex.

The protein resides in the cell projection. It is found in the dendritic spine membrane. Its subcellular location is the synapse. In terms of biological role, regulator of short-term neuronal synaptic plasticity in the dentate gyrus. Associates with AMPA receptors (ionotropic glutamate receptors) in synaptic spines and promotes AMPA receptor desensitization at excitatory synapses. The protein is Protein shisa-9B (shisa9b) of Danio rerio (Zebrafish).